A 469-amino-acid polypeptide reads, in one-letter code: Ribulose bisphosphate carboxylase large chain (469 aa).

Lysine 5 carries the post-translational modification N6,N6,N6-trimethyllysine. Residues asparagine 114 and threonine 164 each coordinate substrate. Catalysis depends on lysine 166, which acts as the Proton acceptor. Lysine 168 contributes to the substrate binding site. Residues lysine 192, aspartate 194, and glutamate 195 each contribute to the Mg(2+) site. N6-carboxylysine is present on lysine 192. Catalysis depends on histidine 285, which acts as the Proton acceptor. The substrate site is built by arginine 286, histidine 318, and serine 370.

This sequence belongs to the RuBisCO large chain family. Type I subfamily. Heterohexadecamer of 8 large chains and 8 small chains; disulfide-linked. The disulfide link is formed within the large subunit homodimers. Mg(2+) serves as cofactor. The disulfide bond which can form in the large chain dimeric partners within the hexadecamer appears to be associated with oxidative stress and protein turnover.

It is found in the plastid. The protein localises to the chloroplast. It carries out the reaction 2 (2R)-3-phosphoglycerate + 2 H(+) = D-ribulose 1,5-bisphosphate + CO2 + H2O. The catalysed reaction is D-ribulose 1,5-bisphosphate + O2 = 2-phosphoglycolate + (2R)-3-phosphoglycerate + 2 H(+). Functionally, ruBisCO catalyzes two reactions: the carboxylation of D-ribulose 1,5-bisphosphate, the primary event in carbon dioxide fixation, as well as the oxidative fragmentation of the pentose substrate in the photorespiration process. Both reactions occur simultaneously and in competition at the same active site. In Nicandra physalodes (Apple-of-Peru), this protein is Ribulose bisphosphate carboxylase large chain.